The chain runs to 172 residues: uncharacterized protein (172 aa).

The 55-residue stretch at 21 to 75 (FKRILLELGLTLKEFSEISGIPYSTLYKVIQGKDFRVSTLIKILKTIRSFEKDEN) folds into the HTH cro/C1-type domain. The H-T-H motif DNA-binding region spans 32-51 (LKEFSEISGIPYSTLYKVIQ).

This is an uncharacterized protein from Methanocaldococcus jannaschii (strain ATCC 43067 / DSM 2661 / JAL-1 / JCM 10045 / NBRC 100440) (Methanococcus jannaschii).